The following is a 559-amino-acid chain: Oxygen-dependent choline dehydrogenase (559 aa).

4-33 (DYIIIGAGSAGNVLAARLTEESDVSVLLLE) contacts FAD. Residues 182-202 (EGFGPMDRTVTPKGRRASTAR) form a disordered region. His471 serves as the catalytic Proton acceptor.

This sequence belongs to the GMC oxidoreductase family. FAD is required as a cofactor.

The catalysed reaction is choline + A = betaine aldehyde + AH2. The enzyme catalyses betaine aldehyde + NAD(+) + H2O = glycine betaine + NADH + 2 H(+). It participates in amine and polyamine biosynthesis; betaine biosynthesis via choline pathway; betaine aldehyde from choline (cytochrome c reductase route): step 1/1. In terms of biological role, involved in the biosynthesis of the osmoprotectant glycine betaine. Catalyzes the oxidation of choline to betaine aldehyde and betaine aldehyde to glycine betaine at the same rate. The sequence is that of Oxygen-dependent choline dehydrogenase from Pectobacterium atrosepticum (strain SCRI 1043 / ATCC BAA-672) (Erwinia carotovora subsp. atroseptica).